Here is a 247-residue protein sequence, read N- to C-terminus: Calpain small subunit 2 (247 aa).

Positions 88, 91, 93, 131, 133, 135, 137, 142, 161, 163, 165, and 204 each coordinate Ca(2+). 4 consecutive EF-hand domains span residues F118 to K151, N148 to Q183, L184 to L212, and V213 to S247.

As to quaternary structure, heterodimer of a large (catalytic) and a small (regulatory) subunit.

Its subcellular location is the cytoplasm. It localises to the cell membrane. Functionally, calcium-regulated non-lysosomal thiol-protease which catalyzes limited proteolysis of substrates involved in cytoskeletal remodeling and signal transduction. This small subunit may act as a tissue-specific chaperone of the large subunit, possibly by helping it fold into its correct conformation for activity. The protein is Calpain small subunit 2 (Capns2) of Mus musculus (Mouse).